Consider the following 556-residue polypeptide: tRNA (guanine(37)-N(1))-methyltransferase (556 aa).

A mitochondrion-targeting transit peptide spans 1 to 30; it reads MIITTKALTVLPHSGLRTTHRSLLARLRHY. S-adenosyl-L-methionine-binding positions include H249, 287 to 288, 315 to 316, and N346; these read DL and DA. Disordered stretches follow at residues 444–465 and 524–556; these read QHEEEDLPQLEEAKRPSNKMKD and KKAAKPAPKPLPAKNKSKPDTKKIEADLNEMQM. Composition is skewed to basic and acidic residues over residues 454–465 and 540–549; these read EEAKRPSNKMKD and SKPDTKKIEA.

This sequence belongs to the class I-like SAM-binding methyltransferase superfamily. TRM5/TYW2 family. Monomer.

The protein resides in the mitochondrion matrix. It is found in the nucleus. It localises to the cytoplasm. The catalysed reaction is guanosine(37) in tRNA + S-adenosyl-L-methionine = N(1)-methylguanosine(37) in tRNA + S-adenosyl-L-homocysteine + H(+). In terms of biological role, specifically methylates the N1 position of guanosine-37 in various cytoplasmic and mitochondrial tRNAs. Methylation is not dependent on the nature of the nucleoside 5' of the target nucleoside. This is the first step in the biosynthesis of wybutosine (yW), a modified base adjacent to the anticodon of tRNAs and required for accurate decoding. The sequence is that of tRNA (guanine(37)-N(1))-methyltransferase from Anopheles gambiae (African malaria mosquito).